Consider the following 218-residue polypeptide: Phosphatidylserine decarboxylase proenzyme (218 aa).

Ser-182 acts as the Schiff-base intermediate with substrate; via pyruvic acid in catalysis. Ser-182 is modified (pyruvic acid (Ser); by autocatalysis).

The protein belongs to the phosphatidylserine decarboxylase family. PSD-A subfamily. In terms of assembly, heterodimer of a large membrane-associated beta subunit and a small pyruvoyl-containing alpha subunit. Pyruvate is required as a cofactor. Post-translationally, is synthesized initially as an inactive proenzyme. Formation of the active enzyme involves a self-maturation process in which the active site pyruvoyl group is generated from an internal serine residue via an autocatalytic post-translational modification. Two non-identical subunits are generated from the proenzyme in this reaction, and the pyruvate is formed at the N-terminus of the alpha chain, which is derived from the carboxyl end of the proenzyme. The post-translation cleavage follows an unusual pathway, termed non-hydrolytic serinolysis, in which the side chain hydroxyl group of the serine supplies its oxygen atom to form the C-terminus of the beta chain, while the remainder of the serine residue undergoes an oxidative deamination to produce ammonia and the pyruvoyl prosthetic group on the alpha chain.

Its subcellular location is the cell membrane. The enzyme catalyses a 1,2-diacyl-sn-glycero-3-phospho-L-serine + H(+) = a 1,2-diacyl-sn-glycero-3-phosphoethanolamine + CO2. It participates in phospholipid metabolism; phosphatidylethanolamine biosynthesis; phosphatidylethanolamine from CDP-diacylglycerol: step 2/2. Functionally, catalyzes the formation of phosphatidylethanolamine (PtdEtn) from phosphatidylserine (PtdSer). The chain is Phosphatidylserine decarboxylase proenzyme from Oleidesulfovibrio alaskensis (strain ATCC BAA-1058 / DSM 17464 / G20) (Desulfovibrio alaskensis).